The sequence spans 107 residues: Nucleoid-associated protein Mlg_1509 (107 aa).

This sequence belongs to the YbaB/EbfC family. Homodimer.

Its subcellular location is the cytoplasm. The protein resides in the nucleoid. Its function is as follows. Binds to DNA and alters its conformation. May be involved in regulation of gene expression, nucleoid organization and DNA protection. The sequence is that of Nucleoid-associated protein Mlg_1509 from Alkalilimnicola ehrlichii (strain ATCC BAA-1101 / DSM 17681 / MLHE-1).